The following is a 356-amino-acid chain: 3-isopropylmalate dehydrogenase (356 aa).

NAD(+) is bound at residue 73–86 (GTQYDGLPREKRPE). Substrate-binding residues include arginine 93, arginine 103, arginine 131, and aspartate 220. 3 residues coordinate Mg(2+): aspartate 220, aspartate 244, and aspartate 248. 278 to 290 (GSAPDIAGKGIAN) is an NAD(+) binding site.

This sequence belongs to the isocitrate and isopropylmalate dehydrogenases family. LeuB type 1 subfamily. As to quaternary structure, homodimer. Mg(2+) is required as a cofactor. The cofactor is Mn(2+).

It is found in the cytoplasm. The catalysed reaction is (2R,3S)-3-isopropylmalate + NAD(+) = 4-methyl-2-oxopentanoate + CO2 + NADH. It participates in amino-acid biosynthesis; L-leucine biosynthesis; L-leucine from 3-methyl-2-oxobutanoate: step 3/4. In terms of biological role, catalyzes the oxidation of 3-carboxy-2-hydroxy-4-methylpentanoate (3-isopropylmalate) to 3-carboxy-4-methyl-2-oxopentanoate. The product decarboxylates to 4-methyl-2 oxopentanoate. The protein is 3-isopropylmalate dehydrogenase of Nitrosomonas europaea (strain ATCC 19718 / CIP 103999 / KCTC 2705 / NBRC 14298).